Consider the following 389-residue polypeptide: NADH-quinone oxidoreductase subunit D (389 aa).

Belongs to the complex I 49 kDa subunit family. In terms of assembly, NDH-1 is composed of 14 different subunits. Subunits NuoB, C, D, E, F, and G constitute the peripheral sector of the complex.

It is found in the cell inner membrane. The catalysed reaction is a quinone + NADH + 5 H(+)(in) = a quinol + NAD(+) + 4 H(+)(out). Functionally, NDH-1 shuttles electrons from NADH, via FMN and iron-sulfur (Fe-S) centers, to quinones in the respiratory chain. The immediate electron acceptor for the enzyme in this species is believed to be ubiquinone. Couples the redox reaction to proton translocation (for every two electrons transferred, four hydrogen ions are translocated across the cytoplasmic membrane), and thus conserves the redox energy in a proton gradient. The chain is NADH-quinone oxidoreductase subunit D from Rickettsia typhi (strain ATCC VR-144 / Wilmington).